Reading from the N-terminus, the 475-residue chain is Serralysin G (475 aa).

A propeptide spanning residues 1-14 is cleaved from the precursor; that stretch reads MALYGKKTDLSSAS. Position 186 (H186) interacts with Zn(2+). The active site involves E187. Zn(2+)-binding residues include H190 and Y226. R261, G263, T265, D293, G295, G296, D298, E337, G342, G344, D346, N351, N355, G359, G360, A361, G362, D364, G368, G370, G371, D373, G377, G378, A379, G380, D382, D391, D398, and D408 together coordinate Ca(2+). 2 Hemolysin-type calcium-binding repeats span residues 340-357 and 358-375; these read IGGS…DNRI and DGGA…ADIL.

This sequence belongs to the peptidase M10B family. Ca(2+) is required as a cofactor. Zn(2+) serves as cofactor.

It localises to the secreted. The enzyme catalyses Preferential cleavage of bonds with hydrophobic residues in P1'.. This chain is Serralysin G (prtG), found in Dickeya chrysanthemi (Pectobacterium chrysanthemi).